Reading from the N-terminus, the 472-residue chain is ATP synthase subunit beta (472 aa).

Position 149–156 (149–156 (GGAGVGKT)) interacts with ATP.

Belongs to the ATPase alpha/beta chains family. F-type ATPases have 2 components, CF(1) - the catalytic core - and CF(0) - the membrane proton channel. CF(1) has five subunits: alpha(3), beta(3), gamma(1), delta(1), epsilon(1). CF(0) has three main subunits: a(1), b(2) and c(9-12). The alpha and beta chains form an alternating ring which encloses part of the gamma chain. CF(1) is attached to CF(0) by a central stalk formed by the gamma and epsilon chains, while a peripheral stalk is formed by the delta and b chains.

The protein resides in the cell inner membrane. It carries out the reaction ATP + H2O + 4 H(+)(in) = ADP + phosphate + 5 H(+)(out). In terms of biological role, produces ATP from ADP in the presence of a proton gradient across the membrane. The catalytic sites are hosted primarily by the beta subunits. This is ATP synthase subunit beta from Pelagibacter ubique (strain HTCC1062).